We begin with the raw amino-acid sequence, 565 residues long: Adenine deaminase 1 (565 aa).

This sequence belongs to the metallo-dependent hydrolases superfamily. Adenine deaminase family. It depends on Mn(2+) as a cofactor.

The enzyme catalyses adenine + H2O + H(+) = hypoxanthine + NH4(+). The polypeptide is Adenine deaminase 1 (Rhizobium meliloti (strain 1021) (Ensifer meliloti)).